The primary structure comprises 382 residues: Lipid-A-disaccharide synthase (382 aa).

The protein belongs to the LpxB family.

The catalysed reaction is 2-N,3-O-bis[(3R)-3-hydroxytetradecanoyl]-alpha-D-glucosaminyl 1-phosphate + UDP-2-N,3-O-bis[(3R)-3-hydroxytetradecanoyl]-alpha-D-glucosamine = lipid A disaccharide (E. coli) + UDP + H(+). It carries out the reaction a lipid X + a UDP-2-N,3-O-bis[(3R)-3-hydroxyacyl]-alpha-D-glucosamine = a lipid A disaccharide + UDP + H(+). It functions in the pathway glycolipid biosynthesis; lipid IV(A) biosynthesis; lipid IV(A) from (3R)-3-hydroxytetradecanoyl-[acyl-carrier-protein] and UDP-N-acetyl-alpha-D-glucosamine: step 5/6. Its function is as follows. Condensation of UDP-2,3-diacylglucosamine and 2,3-diacylglucosamine-1-phosphate to form lipid A disaccharide, a precursor of lipid A, a phosphorylated glycolipid that anchors the lipopolysaccharide to the outer membrane of the cell. This chain is Lipid-A-disaccharide synthase, found in Shigella flexneri serotype 5b (strain 8401).